A 312-amino-acid chain; its full sequence is Glyoxylate/hydroxypyruvate reductase A (312 aa).

R227 is a catalytic residue. The active-site Proton donor is H275.

Belongs to the D-isomer specific 2-hydroxyacid dehydrogenase family. GhrA subfamily.

Its subcellular location is the cytoplasm. The catalysed reaction is glycolate + NADP(+) = glyoxylate + NADPH + H(+). It catalyses the reaction (R)-glycerate + NAD(+) = 3-hydroxypyruvate + NADH + H(+). The enzyme catalyses (R)-glycerate + NADP(+) = 3-hydroxypyruvate + NADPH + H(+). In terms of biological role, catalyzes the NADPH-dependent reduction of glyoxylate and hydroxypyruvate into glycolate and glycerate, respectively. This is Glyoxylate/hydroxypyruvate reductase A from Escherichia coli O127:H6 (strain E2348/69 / EPEC).